Reading from the N-terminus, the 2314-residue chain is A-kinase anchor protein 6 (2314 aa).

Polar residues predominate over residues 1-12 (MLTMSVTLSPLR). Disordered stretches follow at residues 1-25 (MLTM…DASP), 285-432 (PSSC…DPPD), 505-613 (SLCR…PCHA), and 736-755 (TDEK…HSAT). Over residues 301 to 311 (SDDHKGEHGED) the composition is skewed to basic and acidic residues. The segment covering 319-330 (QLDSTVGMSSLD) has biased composition (polar residues). The span at 398–420 (ETQKNERKGSDRKGQVVDLKPEL) shows a compositional bias: basic and acidic residues. Residues 569-592 (SKASSSPPCSHSSESSLGSDSIKS) show a composition bias toward low complexity. Over residues 736 to 753 (TDEKSERPSSSEKNESHS) the composition is skewed to basic and acidic residues. 2 Spectrin repeats span residues 768–847 (QHQE…QLLE) and 1033–1148 (ILEK…LLDD). Phosphoserine is present on S1072. The interval 1349–1401 (CHSGDLSQNSGSESGIVSEGDNEMPTNSDMSLFSMVDGSPSNPETEHPDPQMG) is disordered. Over residues 1353 to 1363 (DLSQNSGSESG) the composition is skewed to polar residues. A phosphoserine mark is found at S1568 and S1593. 2 stretches are compositionally biased toward basic and acidic residues: residues 1816 to 1831 (RSGV…DGGG) and 1874 to 1891 (GENK…HVAD). 3 disordered regions span residues 1816 to 1838 (RSGV…ANPS), 1854 to 1926 (LSEN…KTIS), and 1940 to 2012 (SEDS…SGAR). Over residues 1917–1926 (NLASNVKTIS) the composition is skewed to polar residues. Basic and acidic residues predominate over residues 1944–1958 (SVARKEFCPPNDRHP). Residues 2062–2075 (IIDMASTALKSKSQ) are PKA-RII subunit binding domain. The segment at 2166 to 2286 (EEAGLPGALP…NAKQPKGKVA (121 aa)) is disordered. Basic and acidic residues predominate over residues 2215–2226 (GADDAKEGDDVS). A compositionally biased stretch (polar residues) spans 2227–2243 (HTSQGCAESTEPTTPSG).

In terms of assembly, interacts with RII subunit of PKA, phosphatase 2B (calcineurin) and AKAP79. Interacts with SYNPO2.

Its subcellular location is the sarcoplasmic reticulum. It localises to the nucleus membrane. In terms of biological role, binds to type II regulatory subunits of protein kinase A and anchors/targets them to the nuclear membrane or sarcoplasmic reticulum. May act as an adapter for assembling multiprotein complexes. The sequence is that of A-kinase anchor protein 6 (Akap6) from Rattus norvegicus (Rat).